Here is a 116-residue protein sequence, read N- to C-terminus: Staphylococcal complement inhibitor (116 aa).

The first 31 residues, 1–31 (MKIRKSILAGTLAIVLASPLVTNLDKNEAQA), serve as a signal peptide directing secretion. Positions 62-79 (LATGSLNTYYKRTIKISG) are essential for activity.

It belongs to the SCIN family.

The protein resides in the secreted. Involved in countering the first line of host defense mechanisms. Efficiently inhibits opsonization, phagocytosis and killing of S.aureus by human neutrophils. Acts by binding and stabilizing human C3 convertases (C4b2a and C3bBb), leading to their inactivation. The convertases are no longer able to cleave complement C3, therefore preventing further C3b deposition on the bacterial surface and phagocytosis of the bacterium. Also prevents C5a-induced neutrophil responses. In Staphylococcus aureus (strain N315), this protein is Staphylococcal complement inhibitor (scn).